The primary structure comprises 156 residues: MSRKNRAPKREVLADPLYNSKIVTRLINRVMLDGKRGTAATIVYDAFEQIKEATGNDALEVFETAMDNIMPVLEVRARRVGGSNYQVPVEVRPERRITLGLRWLVNASRARGEHTMKERLAKEIMDAANNTGAAVKKREDTHKMAEANRAFAHFRW.

The protein belongs to the universal ribosomal protein uS7 family. As to quaternary structure, part of the 30S ribosomal subunit. Contacts proteins S9 and S11.

Its function is as follows. One of the primary rRNA binding proteins, it binds directly to 16S rRNA where it nucleates assembly of the head domain of the 30S subunit. Is located at the subunit interface close to the decoding center, probably blocks exit of the E-site tRNA. The sequence is that of Small ribosomal subunit protein uS7 from Streptococcus thermophilus (strain CNRZ 1066).